A 506-amino-acid chain; its full sequence is Maturase K (506 aa).

The protein belongs to the intron maturase 2 family. MatK subfamily.

The protein localises to the plastid. It localises to the chloroplast. Functionally, usually encoded in the trnK tRNA gene intron. Probably assists in splicing its own and other chloroplast group II introns. This Trifolium resupinatum (Persian clover) protein is Maturase K.